The chain runs to 328 residues: MRSFILACADRVVEGATLGAEEALRLAEARGADLHLLFAEASRIRQHFTGNSASLCSIINAKSGRCAENCAFCAQSAAHKTDAQVYPLVDEEEIVRCARDAERNGARCYGIVTSGTGIRPGAELETICNSLRRIRSETAIAPSCSLGILDEETARLLKDAGMVTYHHNLETSRSFFPSICSSHDYEQDVETIRAVKRAGVRVCCGGIFGLGESFGQRIEMTETLRELDVDSVPLNFLNPVEGTRLEKADFLTPLECLKTIAIYRFMLPGKSLSVCGGRETNLRELQSWIFLAGASGMMTGNYLTTLGRKPEQDHQMLADLGMGVGGCS.

The Radical SAM core domain occupies 48 to 278; that stretch reads FTGNSASLCS…GKSLSVCGGR (231 aa). [4Fe-4S] cluster-binding residues include Cys-66, Cys-70, and Cys-73. [2Fe-2S] cluster contacts are provided by Ser-143 and Cys-203.

This sequence belongs to the radical SAM superfamily. Biotin synthase family. As to quaternary structure, homodimer. [4Fe-4S] cluster is required as a cofactor. [2Fe-2S] cluster serves as cofactor.

It catalyses the reaction (4R,5S)-dethiobiotin + (sulfur carrier)-SH + 2 reduced [2Fe-2S]-[ferredoxin] + 2 S-adenosyl-L-methionine = (sulfur carrier)-H + biotin + 2 5'-deoxyadenosine + 2 L-methionine + 2 oxidized [2Fe-2S]-[ferredoxin]. It functions in the pathway cofactor biosynthesis; biotin biosynthesis; biotin from 7,8-diaminononanoate: step 2/2. Its function is as follows. Catalyzes the conversion of dethiobiotin (DTB) to biotin by the insertion of a sulfur atom into dethiobiotin via a radical-based mechanism. In Pelobacter propionicus (strain DSM 2379 / NBRC 103807 / OttBd1), this protein is Biotin synthase.